We begin with the raw amino-acid sequence, 506 residues long: Glycine--tRNA ligase (506 aa).

Substrate-binding residues include R99 and E189. ATP-binding positions include 221–223 (RNE), 231–236 (FRVREF), 305–306 (EL), and 364–367 (GVDR). 236–240 (FEQME) contributes to the substrate binding site. Position 360-364 (360-364 (EPSAG)) interacts with substrate.

It belongs to the class-II aminoacyl-tRNA synthetase family. As to quaternary structure, homodimer.

Its subcellular location is the cytoplasm. It catalyses the reaction tRNA(Gly) + glycine + ATP = glycyl-tRNA(Gly) + AMP + diphosphate. Functionally, catalyzes the attachment of glycine to tRNA(Gly). The protein is Glycine--tRNA ligase of Thermus thermophilus (strain ATCC BAA-163 / DSM 7039 / HB27).